Here is a 200-residue protein sequence, read N- to C-terminus: Ribosome maturation factor RimP (200 aa).

The protein belongs to the RimP family.

The protein localises to the cytoplasm. Required for maturation of 30S ribosomal subunits. In Polaromonas sp. (strain JS666 / ATCC BAA-500), this protein is Ribosome maturation factor RimP.